We begin with the raw amino-acid sequence, 141 residues long: Hemoglobin subunit alpha-D (141 aa).

The 141-residue stretch at 1-141 (MLTEDDKQLI…VSAVLAEKYR (141 aa)) folds into the Globin domain. Residues histidine 58 and histidine 87 each coordinate heme b.

It belongs to the globin family. In terms of assembly, heterotetramer of two alpha-D chains and two beta chains. Red blood cells.

Its function is as follows. Involved in oxygen transport from the lung to the various peripheral tissues. This Chelonoidis niger (Galapagos giant tortoise) protein is Hemoglobin subunit alpha-D (HBAD).